The primary structure comprises 336 residues: Atypical chemokine receptor 1 (336 aa).

Residues 1–63 lie on the Extracellular side of the membrane; the sequence is MGNCLHTAEL…CNLLDDSALP (63 aa). N-linked (GlcNAc...) asparagine glycosylation is found at asparagine 16, asparagine 27, and asparagine 33. Intrachain disulfides connect cysteine 51–cysteine 276 and cysteine 129–cysteine 195. The chain crosses the membrane as a helical span at residues 64–84; the sequence is FFILTSVLGILASSTVLFILF. The Cytoplasmic portion of the chain corresponds to 85–95; the sequence is RPLFRWQLCPG. A helical membrane pass occupies residues 96 to 116; it reads WPVLAQLAVGSALFSIVVPIL. The Extracellular segment spans residues 117–129; that stretch reads APGLGSTHSSALC. A helical membrane pass occupies residues 130–153; sequence SLGYCVWYGSAFAQALLLGCHASL. The Cytoplasmic segment spans residues 154 to 166; the sequence is GHRLGAGQVPGLT. The helical transmembrane segment at 167–187 threads the bilayer; it reads LGLTVGIWGVAALLTLPVTLA. At 188–207 the chain is on the extracellular side; it reads SGASGGLCTPIHSTELKALQ. A helical transmembrane segment spans residues 208–228; sequence ATHTVACLAIFVLLPLGLFGA. The Cytoplasmic portion of the chain corresponds to 229–244; that stretch reads KGLKKALGMGPGPWMN. A helical transmembrane segment spans residues 245–265; the sequence is ILWAWFIFWWPHGVVLGLDFL. The Extracellular portion of the chain corresponds to 266 to 287; it reads VRSKLLLLSTCLAQQALDLLLN. Residues 288–308 form a helical membrane-spanning segment; that stretch reads LAEALAILHCVATPLILALFY. The Cytoplasmic portion of the chain corresponds to 309–336; that stretch reads HQATRTLLPSLPLPEGWSSHLDTLGSKS.

The protein belongs to the G-protein coupled receptor 1 family. Atypical chemokine receptor subfamily.

It localises to the early endosome. The protein resides in the recycling endosome. The protein localises to the membrane. In terms of biological role, atypical chemokine receptor that controls chemokine levels and localization via high-affinity chemokine binding that is uncoupled from classic ligand-driven signal transduction cascades, resulting instead in chemokine sequestration, degradation, or transcytosis. Also known as interceptor (internalizing receptor) or chemokine-scavenging receptor or chemokine decoy receptor. Has a promiscuous chemokine-binding profile, interacting with inflammatory chemokines of both the CXC and the CC subfamilies but not with homeostatic chemokines. Acts as a receptor for chemokines including CCL2, CCL5, CCL7, CCL11, CCL13, CCL14, CCL17, CXCL5, CXCL6, IL8/CXCL8, CXCL11, GRO, RANTES, MCP-1 and TARC. May regulate chemokine bioavailability and, consequently, leukocyte recruitment through two distinct mechanisms: when expressed in endothelial cells, it sustains the abluminal to luminal transcytosis of tissue-derived chemokines and their subsequent presentation to circulating leukocytes; when expressed in erythrocytes, serves as blood reservoir of cognate chemokines but also as a chemokine sink, buffering potential surges in plasma chemokine levels. The polypeptide is Atypical chemokine receptor 1 (ACKR1) (Gorilla gorilla gorilla (Western lowland gorilla)).